Reading from the N-terminus, the 60-residue chain is Mastoparan-D (60 aa).

Residues 1 to 27 form the signal peptide; sequence MKNTILILFTAFIALLGFFGMSAEALA. AXPX repeat units follow at residues 27–30, 31–34, 35–38, and 41–44; these read ADPI, ADPV, AGPN, and ADPE. The propeptide occupies 28–45; it reads DPIADPVAGPNPEADPEA. The residue at position 59 (Leu-59) is a Leucine amide.

The protein belongs to the MCD family. Mastoparan subfamily. In terms of tissue distribution, expressed by the venom gland.

Its subcellular location is the secreted. The protein localises to the target cell membrane. Antimicrobial and mast cell degranulating peptide. Has broad spectrum antibacterial activity against both Gram-positive and Gram-negative bacteria (S.aureus MIC=24-32 ug/ml, S.xylosus MIC=2 ug/ml, S.alactolyticus MIC=16 ug/ml, C.koseri MIC=4 ug/ml, E.coli MIC=8 ug/ml, K.pneumoniae MIC=32 ug/ml, P.aerugiosa MIC=128 ug/ml, S.choleraesuis MIC=16 ug/ml, S.typhimurium MIC=32 ug/ml, V.parahamelytics MIC=32 ug/ml). Affects membrane permeability of E.coli. Shows hemolytic activities on sheep, chicken and human erythrocytes. Its mast cell degranulation activity may be related to the activation of G-protein coupled receptors in mast cells as well as interaction with other proteins located in cell endosomal membranes in the mast cells. The sequence is that of Mastoparan-D from Vespa ducalis (Black-tailed hornet).